The primary structure comprises 198 residues: Photosystem I assembly protein Ycf4 (198 aa).

Positions 1-20 (MTASTTINKGDSPNGDSSAS) are disordered. 2 helical membrane passes run 38 to 58 (WASIVTLGASGFLLAGISSYL) and 78 to 98 (LVMGLYGTAGLLLASYLWLAI).

Belongs to the Ycf4 family.

It is found in the cellular thylakoid membrane. Its function is as follows. Seems to be required for the assembly of the photosystem I complex. The protein is Photosystem I assembly protein Ycf4 of Trichormus variabilis (strain ATCC 29413 / PCC 7937) (Anabaena variabilis).